The chain runs to 450 residues: UDP-N-acetylmuramoylalanine--D-glutamate ligase (450 aa).

119-125 contacts ATP; the sequence is GSNGKTT.

Belongs to the MurCDEF family.

It localises to the cytoplasm. The catalysed reaction is UDP-N-acetyl-alpha-D-muramoyl-L-alanine + D-glutamate + ATP = UDP-N-acetyl-alpha-D-muramoyl-L-alanyl-D-glutamate + ADP + phosphate + H(+). The protein operates within cell wall biogenesis; peptidoglycan biosynthesis. Functionally, cell wall formation. Catalyzes the addition of glutamate to the nucleotide precursor UDP-N-acetylmuramoyl-L-alanine (UMA). This Bacillus mycoides (strain KBAB4) (Bacillus weihenstephanensis) protein is UDP-N-acetylmuramoylalanine--D-glutamate ligase.